The chain runs to 2038 residues: Fer-1-like protein 5 (2038 aa).

7 consecutive C2 domains span residues 1 to 100 (MLRV…MFVR), 145 to 265 (TQKK…TLLR), 307 to 424 (QNTR…QGMY), 1055 to 1186 (TPED…FTPL), 1225 to 1345 (IPCK…SLNY), 1467 to 1587 (PKPP…ARCG), and 1705 to 1853 (GPPG…KQCS). Aspartate 1502, aspartate 1508, aspartate 1557, phenylalanine 1558, aspartate 1559, aspartate 1565, aspartate 1824, serine 1827, and aspartate 1830 together coordinate Ca(2+). The chain crosses the membrane as a helical span at residues 1961–1981 (IICLVVTLVIGFILLNFVYSA).

This sequence belongs to the ferlin family. In terms of assembly, interacts (via second C2 domain) with EHD1 and EHD2. Ca(2+) serves as cofactor. Expressed in differentiating myoblasts and myotubes.

It is found in the cell membrane. The protein localises to the membrane. In terms of biological role, plays a role in myoblast fusion; probable mediator of endocytic recycling for membrane trafficking events during myotube formation. This is Fer-1-like protein 5 (Fer1l5) from Mus musculus (Mouse).